Here is a 69-residue protein sequence, read N- to C-terminus: MRFLNIFLFFAVMIAFVSASPVLEEEEIDIEPRITCDLIGNERLCVVHCLAKGFRGGWCDSRKVCNCRR.

Residues 1–19 form the signal peptide; the sequence is MRFLNIFLFFAVMIAFVSA. A propeptide spanning residues 20–33 is cleaved from the precursor; it reads SPVLEEEEIDIEPR. 3 disulfides stabilise this stretch: Cys36–Cys59, Cys45–Cys65, and Cys49–Cys67.

This sequence belongs to the asilidin-12 family. As to expression, expressed by the venom gland.

It is found in the secreted. Functionally, the recombinant peptide moderately increases Kv11.1/KCNH2/ERG1 currents and shifts the voltage-dependence of the channel activation to hyperpolarised potentials. In vivo, induces neurotoxic effects when injected into insects (tested on L.cuprina and A.domesticus). The polypeptide is U-Asilidin(12)-Dg3b (Dolopus genitalis (Giant Australian assassin fly)).